The primary structure comprises 307 residues: 4-hydroxy-tetrahydrodipicolinate synthase (307 aa).

T57 is a binding site for pyruvate. Y145 serves as the catalytic Proton donor/acceptor. K173 (schiff-base intermediate with substrate) is an active-site residue. V215 serves as a coordination point for pyruvate.

This sequence belongs to the DapA family. In terms of assembly, homotetramer; dimer of dimers.

It localises to the cytoplasm. The enzyme catalyses L-aspartate 4-semialdehyde + pyruvate = (2S,4S)-4-hydroxy-2,3,4,5-tetrahydrodipicolinate + H2O + H(+). The protein operates within amino-acid biosynthesis; L-lysine biosynthesis via DAP pathway; (S)-tetrahydrodipicolinate from L-aspartate: step 3/4. Functionally, catalyzes the condensation of (S)-aspartate-beta-semialdehyde [(S)-ASA] and pyruvate to 4-hydroxy-tetrahydrodipicolinate (HTPA). This chain is 4-hydroxy-tetrahydrodipicolinate synthase, found in Leptospira interrogans serogroup Icterohaemorrhagiae serovar copenhageni (strain Fiocruz L1-130).